Here is a 107-residue protein sequence, read N- to C-terminus: Nucleoid-associated protein YaaK (107 aa).

The disordered stretch occupies residues 1-24 (MRGGMGNMQKMMKQMQKMQKDMAK). The segment covering 8–17 (MQKMMKQMQK) has biased composition (low complexity).

This sequence belongs to the YbaB/EbfC family. As to quaternary structure, homodimer.

It is found in the cytoplasm. It localises to the nucleoid. Binds to DNA and alters its conformation. May be involved in regulation of gene expression, nucleoid organization and DNA protection. This chain is Nucleoid-associated protein YaaK (yaaK), found in Bacillus subtilis (strain 168).